The primary structure comprises 226 residues: MSLSDFYVTGTDTGIGKTFVSCILLHMLRGRGQRAVGMKPVASGCTYSDTGWRNEDALALQAASDPTPAYDLINPYALPAAVAPEIAAIEAGVTVALEPLSASFTQLRAQADVVVVEGVGGWATPLNATFDQATLVRALEIPVVLVVGLRLGCMNHARLSTAAIMADGLRCIGWIANTIDPHMARIEENLALLRQRLPIPYWGHLPHIPPGINPATLATRLHPQGD.

14–19 is an ATP binding site; sequence GIGKTF. Threonine 18 serves as a coordination point for Mg(2+). Residue lysine 39 is part of the active site. Serine 43 contacts substrate. Residues aspartate 56, 117 to 120, 177 to 178, 206 to 208, and asparagine 213 contribute to the ATP site; these read EGVG, NT, and PHI. Positions 56 and 117 each coordinate Mg(2+).

Belongs to the dethiobiotin synthetase family. Homodimer. It depends on Mg(2+) as a cofactor.

The protein resides in the cytoplasm. It catalyses the reaction (7R,8S)-7,8-diammoniononanoate + CO2 + ATP = (4R,5S)-dethiobiotin + ADP + phosphate + 3 H(+). It participates in cofactor biosynthesis; biotin biosynthesis; biotin from 7,8-diaminononanoate: step 1/2. In terms of biological role, catalyzes a mechanistically unusual reaction, the ATP-dependent insertion of CO2 between the N7 and N8 nitrogen atoms of 7,8-diaminopelargonic acid (DAPA, also called 7,8-diammoniononanoate) to form a ureido ring. The chain is ATP-dependent dethiobiotin synthetase BioD from Xylella fastidiosa (strain Temecula1 / ATCC 700964).